A 256-amino-acid polypeptide reads, in one-letter code: Triosephosphate isomerase (256 aa).

9–11 (NWK) provides a ligand contact to substrate. Catalysis depends on H97, which acts as the Electrophile. The active-site Proton acceptor is the E169. Substrate contacts are provided by residues G175, S214, and 235 to 236 (GG).

It belongs to the triosephosphate isomerase family. Homodimer.

The protein resides in the cytoplasm. The enzyme catalyses D-glyceraldehyde 3-phosphate = dihydroxyacetone phosphate. Its pathway is carbohydrate biosynthesis; gluconeogenesis. It participates in carbohydrate degradation; glycolysis; D-glyceraldehyde 3-phosphate from glycerone phosphate: step 1/1. Its function is as follows. Involved in the gluconeogenesis. Catalyzes stereospecifically the conversion of dihydroxyacetone phosphate (DHAP) to D-glyceraldehyde-3-phosphate (G3P). The sequence is that of Triosephosphate isomerase from Aliivibrio fischeri (strain ATCC 700601 / ES114) (Vibrio fischeri).